Reading from the N-terminus, the 957-residue chain is Glycine dehydrogenase (decarboxylating) (957 aa).

Residue K708 is modified to N6-(pyridoxal phosphate)lysine.

This sequence belongs to the GcvP family. As to quaternary structure, the glycine cleavage system is composed of four proteins: P, T, L and H. Requires pyridoxal 5'-phosphate as cofactor.

The catalysed reaction is N(6)-[(R)-lipoyl]-L-lysyl-[glycine-cleavage complex H protein] + glycine + H(+) = N(6)-[(R)-S(8)-aminomethyldihydrolipoyl]-L-lysyl-[glycine-cleavage complex H protein] + CO2. Functionally, the glycine cleavage system catalyzes the degradation of glycine. The P protein binds the alpha-amino group of glycine through its pyridoxal phosphate cofactor; CO(2) is released and the remaining methylamine moiety is then transferred to the lipoamide cofactor of the H protein. This is Glycine dehydrogenase (decarboxylating) from Shigella boydii serotype 4 (strain Sb227).